Reading from the N-terminus, the 483-residue chain is MIPVILSGGSGSRLWPLSRKQFPKQFLALTGEHTLFQQTLERLVFEGMDTPIVVCNKDHRFIVNEQLANRKLECQRILMEPFGRNTAPAVALTAMMLVNEGRDELMLVLPADHVIDDQKALQRALALATVAAERGEMVLFGVPATRPETGYGYIKSTNDSLLPEGVSRVQQFVEKPDEKRAVEFVKSGGYFWNSGMFLFRASRFLEELKKHDPDIYDTCVLTLERSEQTADTVTLDDATFACCPDNSIDYAVMEKTQRACVVPLSAGWSDVGCWASLWAVNDKDIHGNVSKGDVVIQDSRNCMIHGNGKLVSVIGLDNIVVVETKDAMMIAHKDKVQGVKQMVSTLNDQGRSETQNHCEVYRPWGSYDSVDMGGRFQVKHISVKPGACLSLQMHHHRAEHWIVVSGTAEVTCDENVFLLTENQSTYIPIASVHRLRNPGKIPLEIIEVQSGSYLGEDDIERFEDIYGRSTPVERGVSVKTIAQ.

It belongs to the mannose-6-phosphate isomerase type 2 family. In terms of assembly, monomer. It depends on Co(2+) as a cofactor.

The catalysed reaction is D-mannose 6-phosphate = D-fructose 6-phosphate. It carries out the reaction alpha-D-mannose 1-phosphate + GTP + H(+) = GDP-alpha-D-mannose + diphosphate. It participates in nucleotide-sugar biosynthesis; GDP-alpha-D-mannose biosynthesis; GDP-alpha-D-mannose from alpha-D-mannose 1-phosphate (GTP route): step 1/1. The protein operates within nucleotide-sugar biosynthesis; GDP-alpha-D-mannose biosynthesis; alpha-D-mannose 1-phosphate from D-fructose 6-phosphate: step 1/2. Functionally, produces a precursor for alginate polymerization. The alginate layer provides a protective barrier against host immune defenses and antibiotics. The polypeptide is Alginate biosynthesis protein AlgA (algA) (Pseudomonas fluorescens).